Reading from the N-terminus, the 717-residue chain is Polyribonucleotide nucleotidyltransferase (717 aa).

Asp-488 and Asp-494 together coordinate Mg(2+). One can recognise a KH domain in the interval 555–614 (PRIEVMNIPVDKIREVIGSGGKVIREIVEKTGAKINIEDDGTVKIASSSGKEIEAARKWI). One can recognise an S1 motif domain in the interval 624–692 (GQIYEGTVVK…ERGKVRLSMK (69 aa)).

It belongs to the polyribonucleotide nucleotidyltransferase family. The cofactor is Mg(2+).

It localises to the cytoplasm. The catalysed reaction is RNA(n+1) + phosphate = RNA(n) + a ribonucleoside 5'-diphosphate. Its function is as follows. Involved in mRNA degradation. Catalyzes the phosphorolysis of single-stranded polyribonucleotides processively in the 3'- to 5'-direction. In Sinorhizobium fredii (strain NBRC 101917 / NGR234), this protein is Polyribonucleotide nucleotidyltransferase.